A 274-amino-acid chain; its full sequence is Long chain fatty acid elongase 5 (274 aa).

Topologically, residues Met1–Glu23 are extracellular. A helical membrane pass occupies residues Gly24–Met44. The Cytoplasmic portion of the chain corresponds to Lys45–Gly61. Residues Ile62 to Ile82 form a helical membrane-spanning segment. The Extracellular portion of the chain corresponds to Arg83 to Tyr105. Residues Trp106 to Leu126 traverse the membrane as a helical segment. At Arg127–Arg129 the chain is on the cytoplasmic side. Residues Pro130–Tyr150 form a helical membrane-spanning segment. The Extracellular portion of the chain corresponds to His151–His156. The chain crosses the membrane as a helical span at residues Met157–Leu177. The Cytoplasmic portion of the chain corresponds to Lys178–Ser187. Residues Val188–Val208 traverse the membrane as a helical segment. Topologically, residues His209–Arg227 are extracellular. Residues Gly228–Lys248 form a helical membrane-spanning segment. Over Glu249–Asn274 the chain is Cytoplasmic.

This sequence belongs to the ELO family. In terms of tissue distribution, expressed in the gut and unidentified head cells.

Its subcellular location is the membrane. The catalysed reaction is 11-methyldodecanoyl-CoA + malonyl-CoA + H(+) = 3-oxoisopentadecanoyl-CoA + CO2 + CoA. The enzyme catalyses isopentadecanoyl-CoA + malonyl-CoA + H(+) = 3-oxoisoheptadecanoyl-CoA + CO2 + CoA. The protein operates within lipid metabolism; fatty acid biosynthesis. Catalyzes the first and rate-limiting reaction of the four reactions that constitute the long-chain fatty acids elongation cycle. Uses malonyl-CoA to add 2 carbons per cycle to the chain of long-chain fatty acids. Condensing enzyme required for the formation of isopentadecanoate (C15iso) and isoheptadecanoate (C17iso), both play critical roles in animal development and growth. The sequence is that of Long chain fatty acid elongase 5 from Caenorhabditis elegans.